A 430-amino-acid chain; its full sequence is Adenylosuccinate synthetase (430 aa).

GTP is bound by residues 12-18 and 40-42; these read GDEGKGK and GHT. Asp13 acts as the Proton acceptor in catalysis. Residues Asp13 and Gly40 each contribute to the Mg(2+) site. Residues 13-16, 38-41, Thr128, Arg142, Gln223, Thr238, and Arg302 each bind IMP; these read DEGK and NAGH. His41 (proton donor) is an active-site residue. Substrate is bound at residue 298-304; that stretch reads TVTKRPR. Residues Arg304, 330-332, and 412-414 contribute to the GTP site; these read CVD and SVG.

Belongs to the adenylosuccinate synthetase family. As to quaternary structure, homodimer. Mg(2+) is required as a cofactor.

The protein localises to the cytoplasm. The enzyme catalyses IMP + L-aspartate + GTP = N(6)-(1,2-dicarboxyethyl)-AMP + GDP + phosphate + 2 H(+). The protein operates within purine metabolism; AMP biosynthesis via de novo pathway; AMP from IMP: step 1/2. Plays an important role in the de novo pathway of purine nucleotide biosynthesis. Catalyzes the first committed step in the biosynthesis of AMP from IMP. The polypeptide is Adenylosuccinate synthetase (Ligilactobacillus salivarius (strain UCC118) (Lactobacillus salivarius)).